We begin with the raw amino-acid sequence, 500 residues long: MNSFPWLTIIVVFPILTGSLIFLLPHRGNKVMKWYTLCICILELLLTTYTFCYHFQLDDPLTQLTENYKWIHFFDFYWRLGIDGLSIGPILLTGFITTLATLAAWPVTRDAQLFHFLMLAMYSGQIGSFSSRDLLLFFLMWEFELIPVYLLLSMWGGKKRLYSATKFILYTAGGSIFLLIGVLGIGLYGSNEPTLNFETLANQSYPVALEVIFYVGFLIAFAVKLPIIPLHTWLPDTHGEAHYSTCMLLAGILLKMGAYGLVRINMELLPHAHCLFSPGLIIVGAIQIIYAASTSPGQLNLKKRIAYSSISHMGFIIIGIGSLSDTGLNGAILQIISHGFIGAALFFLAGTSYDRIRLLYLDEMGGMAIPLPKLFTMLSILSMASLALPGLSGFVAELLVFFGIITSQKYLLMPKILIAFLMAIGMILTPIYSLSMLRQMFYGYKLFNVPNYYFFDSGPRELFVSISLLLPIIGIGIYPDFVLSLSVEKVEAIISHFFFR.

Helical transmembrane passes span 4–24 (FPWL…IFLL), 37–57 (LCIC…HFQL), 87–107 (IGPI…AWPV), 111–131 (AQLF…SFSS), 134–154 (LLLF…LLSM), 167–187 (FILY…GIGL), 208–228 (ALEV…LPII), 242–262 (HYST…YGLV), 272–292 (AHCL…IYAA), 305–325 (IAYS…SLSD), 330–350 (GAIL…FLAG), 386–406 (LALP…GIIT), 416–436 (ILIA…SLSM), and 462–482 (LFVS…PDFV).

Belongs to the complex I subunit 4 family.

It is found in the plastid. Its subcellular location is the chloroplast thylakoid membrane. It catalyses the reaction a plastoquinone + NADH + (n+1) H(+)(in) = a plastoquinol + NAD(+) + n H(+)(out). The catalysed reaction is a plastoquinone + NADPH + (n+1) H(+)(in) = a plastoquinol + NADP(+) + n H(+)(out). The chain is NAD(P)H-quinone oxidoreductase chain 4, chloroplastic from Oenothera parviflora (Small-flowered evening primrose).